A 206-amino-acid chain; its full sequence is Small ribosomal subunit protein uS2 (206 aa).

Belongs to the universal ribosomal protein uS2 family.

This chain is Small ribosomal subunit protein uS2, found in Methanothrix thermoacetophila (strain DSM 6194 / JCM 14653 / NBRC 101360 / PT) (Methanosaeta thermophila).